Here is a 602-residue protein sequence, read N- to C-terminus: Basic-leucine zipper transcription factor B (602 aa).

Residues 1-10 show a composition bias toward polar residues; sequence MNQFYQSTTG. Positions 1–128 are disordered; that stretch reads MNQFYQSTTG…NRVNQNLASR (128 aa). 2 stretches are compositionally biased toward low complexity: residues 11-54 and 66-102; these read GQQN…TSTS and QQQI…YNGD. Positions 58 to 94 form a coiled coil; that stretch reads KNKDNQSKQQQIQQQQIQQQQQQQQQQQQQIQQQSVD. The region spanning 113–176 is the bZIP domain; the sequence is ENKKNRNRVN…GVEIMKPDPA (64 aa). A basic motif region spans residues 115 to 135; sequence KKNRNRVNQNLASRNYRQRKK. Positions 138–145 are leucine-zipper; sequence IKEIEEKL. Disordered stretches follow at residues 328-401 and 525-602; these read TNLS…QNNN and QNQT…PSRQ. 3 stretches are compositionally biased toward low complexity: residues 336–350, 358–401, and 525–592; these read PNPT…TQST, LTLL…QNNN, and QNQT…SSPY. Residues 509 to 552 adopt a coiled-coil conformation; it reads TFSQQTQQLQQAQLQLQNQTKQQQQQLQNNNNNNNNNNNNNNSF. A compositionally biased stretch (polar residues) spans 593–602; it reads NHHQQQPSRQ.

This sequence belongs to the bZIP family. Binds DNA as a dimer. Heterodimerizes with dimA; in vitro. Also able to form homodimer; in vitro.

It localises to the nucleus. Its function is as follows. Transcriptional regulator involved in DIF-1 signaling. DIF-1 (Differentiation Inducing Factor-1) is a signal molecule involved in the differentiation of pstO (prestalk-O) cells. May be a direct activator of ecmA. The protein is Basic-leucine zipper transcription factor B (dimB) of Dictyostelium discoideum (Social amoeba).